A 462-amino-acid polypeptide reads, in one-letter code: SET domain-containing protein SmydA-8, isoform A (462 aa).

Residues 55-287 enclose the SET domain; it reads PNWTISSSTV…KGGEITTTYT (233 aa).

Belongs to the class V-like SAM-binding methyltransferase superfamily.

This chain is SET domain-containing protein SmydA-8, isoform A, found in Drosophila melanogaster (Fruit fly).